The sequence spans 346 residues: DNA-directed RNA polymerases I and III subunit RPAC1 (346 aa).

Position 2 is an N-acetylalanine (A2). At S4 the chain carries Phosphoserine.

The protein belongs to the archaeal Rpo3/eukaryotic RPB3 RNA polymerase subunit family. In terms of assembly, component of the RNA polymerase I and RNA polymerase III complexes consisting of at least 13 and 17 subunits, respectively. Pol I complex consists of a ten-subunit catalytic core composed of POLR1A/RPA1, POLR1B/RPA2, POLR1C/RPAC1, POLR1D/RPAC2, POLR1H/RPA12, POLR2E/RPABC1, POLR2F/RPABC2, POLR2H/RPABC3, POLR2K/RPABC4 and POLR2L/RPABC5; a mobile stalk subunit POLR1F/RPA43 protruding from the core and additional subunits homologous to general transcription factors POLR1E/RPA49 and POLR1G/RPA34. Part of Pol I pre-initiation complex (PIC), in which Pol I core assembles with RRN3 and promoter-bound UTBF and SL1/TIF-IB complex. Pol III complex consists of a ten-subunit catalytic core composed of POLR3A/RPC1, POLR3B/RPC2, POLR1C/RPAC1, POLR1D/RPAC2, POLR3K/RPC10, POLR2E/RPABC1, POLR2F/RPABC2, POLR2H/RPABC3, POLR2K/RPABC4 and POLR2L/RPABC5; a mobile stalk composed of two subunits POLR3H/RPC8 and CRCP/RPC9, protruding from the core and functioning primarily in transcription initiation; and additional subunits homologous to general transcription factors of the RNA polymerase II machinery, POLR3C/RPC3-POLR3F/RPC6-POLR3G/RPC7 heterotrimer required for transcription initiation and POLR3D/RPC4-POLR3E/RPC5 heterodimer involved in both transcription initiation and termination.

It localises to the nucleus. The protein localises to the nucleolus. The protein resides in the cytoplasm. Its subcellular location is the cytosol. In terms of biological role, DNA-dependent RNA polymerase catalyzes the transcription of DNA into RNA using the four ribonucleoside triphosphates as substrates. Common component of RNA polymerases I and III which synthesize ribosomal RNA precursors and short non-coding RNAs including 5S rRNA, snRNAs, tRNAs and miRNAs, respectively. POLR1C/RPAC1 is part of the polymerase core and may function as a clamp element that moves to open and close the cleft. In Homo sapiens (Human), this protein is DNA-directed RNA polymerases I and III subunit RPAC1.